We begin with the raw amino-acid sequence, 467 residues long: Na(+)-translocating NADH-quinone reductase subunit A (467 aa).

It belongs to the NqrA family. As to quaternary structure, composed of six subunits; NqrA, NqrB, NqrC, NqrD, NqrE and NqrF.

It catalyses the reaction a ubiquinone + n Na(+)(in) + NADH + H(+) = a ubiquinol + n Na(+)(out) + NAD(+). In terms of biological role, NQR complex catalyzes the reduction of ubiquinone-1 to ubiquinol by two successive reactions, coupled with the transport of Na(+) ions from the cytoplasm to the periplasm. NqrA to NqrE are probably involved in the second step, the conversion of ubisemiquinone to ubiquinol. The polypeptide is Na(+)-translocating NADH-quinone reductase subunit A (Chlamydia pneumoniae (Chlamydophila pneumoniae)).